Consider the following 177-residue polypeptide: Peptide deformylase (177 aa).

Positions 99 and 141 each coordinate Fe cation. Glu142 is a catalytic residue. His145 is a Fe cation binding site.

It belongs to the polypeptide deformylase family. It depends on Fe(2+) as a cofactor.

The catalysed reaction is N-terminal N-formyl-L-methionyl-[peptide] + H2O = N-terminal L-methionyl-[peptide] + formate. Its function is as follows. Removes the formyl group from the N-terminal Met of newly synthesized proteins. Requires at least a dipeptide for an efficient rate of reaction. N-terminal L-methionine is a prerequisite for activity but the enzyme has broad specificity at other positions. The polypeptide is Peptide deformylase (Rhizorhabdus wittichii (strain DSM 6014 / CCUG 31198 / JCM 15750 / NBRC 105917 / EY 4224 / RW1) (Sphingomonas wittichii)).